The primary structure comprises 71 residues: Prokaryotic ubiquitin-like protein Pup (71 aa).

The disordered stretch occupies residues 1–30; that stretch reads MPSASGHHQIPAETQRHDDDQTQETAQGLS. The stretch at 23-56 forms a coiled coil; sequence QETAQGLSAAAMLAQEQADDLDAILDDIETVLET. Residues 27–65 form an ARC ATPase binding region; the sequence is QGLSAAAMLAQEQADDLDAILDDIETVLETNAEEYVSSF. Residue glutamate 71 forms an Isoglutamyl lysine isopeptide (Glu-Lys) (interchain with K-? in acceptor proteins) linkage.

The protein belongs to the prokaryotic ubiquitin-like protein family. As to quaternary structure, strongly interacts with the proteasome-associated ATPase ARC through a hydrophobic interface; the interacting region of Pup lies in its C-terminal half. There is one Pup binding site per ARC hexamer ring.

The protein operates within protein degradation; proteasomal Pup-dependent pathway. Its function is as follows. Protein modifier that is covalently attached to lysine residues of substrate proteins, thereby targeting them for proteasomal degradation. The tagging system is termed pupylation. This chain is Prokaryotic ubiquitin-like protein Pup, found in Bifidobacterium animalis subsp. lactis (strain AD011).